Reading from the N-terminus, the 278-residue chain is Orotidine 5'-phosphate decarboxylase (278 aa).

Lysine 96 functions as the Proton donor in the catalytic mechanism.

This sequence belongs to the OMP decarboxylase family. Type 2 subfamily.

It carries out the reaction orotidine 5'-phosphate + H(+) = UMP + CO2. It functions in the pathway pyrimidine metabolism; UMP biosynthesis via de novo pathway; UMP from orotate: step 2/2. This Salinispora arenicola (strain CNS-205) protein is Orotidine 5'-phosphate decarboxylase.